The sequence spans 284 residues: Nucleotide-binding protein Sputw3181_3461 (284 aa).

8 to 15 (GRSGSGKS) is an ATP binding site. 56–59 (DVRN) serves as a coordination point for GTP.

The protein belongs to the RapZ-like family.

In terms of biological role, displays ATPase and GTPase activities. The chain is Nucleotide-binding protein Sputw3181_3461 from Shewanella sp. (strain W3-18-1).